The sequence spans 30 residues: Snaclec carinactivase-1 regulatory subunit 14 kDa chain (30 aa).

One can recognise a C-type lectin domain in the interval 1 to 30; the sequence is DCLPDWFHYEGHCYRVFDEPKKWADAEKFC. A disulfide bridge links C2 with C13.

This sequence belongs to the snaclec family. In terms of assembly, heterodimer of a metalloproteinase subunit and a regulatory subunit comprising two polypeptides disulfide-linked (14 kDa and 17 kDa chains). In terms of tissue distribution, expressed by the venom gland.

It is found in the secreted. Functionally, calcium-dependent prothrombin activator. This protein may activate prothrombin via recognition by the regulatory subunit of the calcium ion bound conformation of its gamma-carboxyglutamic acid (GLA) domain, and the subsequent conversion of prothrombin to active thrombin is catalyzed by the catalytic subunit. The chain is Snaclec carinactivase-1 regulatory subunit 14 kDa chain from Echis carinatus (Saw-scaled viper).